Here is a 286-residue protein sequence, read N- to C-terminus: Elongation factor Ts (286 aa).

The segment at 82 to 85 (TDFV) is involved in Mg(2+) ion dislocation from EF-Tu.

Belongs to the EF-Ts family.

Its subcellular location is the cytoplasm. Functionally, associates with the EF-Tu.GDP complex and induces the exchange of GDP to GTP. It remains bound to the aminoacyl-tRNA.EF-Tu.GTP complex up to the GTP hydrolysis stage on the ribosome. This chain is Elongation factor Ts, found in Hahella chejuensis (strain KCTC 2396).